The following is a 675-amino-acid chain: Putative methyl-accepting chemotaxis AlkN (675 aa).

The next 2 membrane-spanning stretches (helical) occupy residues 24-44 (IALY…FLLS) and 303-323 (FPSV…FFII). Residues 343-394 (QRNQAAILRLLDELGDLADGDLTVQATVTEDFTGAIADSINYSIDQLRNLVQ) form the HAMP domain. Positions 399–635 (SAVQVASAAQ…HISNTMNVIQ (237 aa)) constitute a Methyl-accepting transducer domain.

This sequence belongs to the methyl-accepting chemotaxis (MCP) protein family.

It is found in the membrane. Its pathway is hydrocarbon metabolism; alkane degradation. Chemotactic-signal transducers respond to changes in the concentration of attractants and repellents in the environment, transduce a signal from the outside to the inside of the cell, and facilitate sensory adaptation through the variation of the level of methylation. In Alcanivorax borkumensis (strain ATCC 700651 / DSM 11573 / NCIMB 13689 / SK2), this protein is Putative methyl-accepting chemotaxis AlkN.